We begin with the raw amino-acid sequence, 157 residues long: Cyclic pyranopterin monophosphate synthase (157 aa).

Substrate is bound by residues 74-76 (MCH) and 112-113 (ME). Asp127 is a catalytic residue.

It belongs to the MoaC family. As to quaternary structure, homohexamer; trimer of dimers.

The catalysed reaction is (8S)-3',8-cyclo-7,8-dihydroguanosine 5'-triphosphate = cyclic pyranopterin phosphate + diphosphate. Its pathway is cofactor biosynthesis; molybdopterin biosynthesis. Its function is as follows. Catalyzes the conversion of (8S)-3',8-cyclo-7,8-dihydroguanosine 5'-triphosphate to cyclic pyranopterin monophosphate (cPMP). This Campylobacter jejuni subsp. jejuni serotype O:2 (strain ATCC 700819 / NCTC 11168) protein is Cyclic pyranopterin monophosphate synthase.